Reading from the N-terminus, the 204-residue chain is Inner membrane protein BB_0250 (204 aa).

The next 5 helical transmembrane spans lie at 17-37 (IAYSPIVFFSLLILAGLNVPI), 58-78 (ILIFLGIFWGAYLGDIISFYI), 101-121 (YYYGQYGVLTLFIGRFIPFGV), 139-159 (FIVSDFFATLLSIVVYFTLSF), and 172-192 (IKIIIFAIFIAVIATTIIIYV).

The protein belongs to the DedA family.

The protein resides in the cell inner membrane. Its function is as follows. Required for proper cell division and envelope integrity. This chain is Inner membrane protein BB_0250, found in Borreliella burgdorferi (strain ATCC 35210 / DSM 4680 / CIP 102532 / B31) (Borrelia burgdorferi).